We begin with the raw amino-acid sequence, 294 residues long: Urease accessory protein UreD 1 (294 aa).

A disordered region spans residues 1–20; it reads MALSLDDLPEKPAPAEPVSA.

The protein belongs to the UreD family. UreD, UreF and UreG form a complex that acts as a GTP-hydrolysis-dependent molecular chaperone, activating the urease apoprotein by helping to assemble the nickel containing metallocenter of UreC. The UreE protein probably delivers the nickel.

It localises to the cytoplasm. Required for maturation of urease via the functional incorporation of the urease nickel metallocenter. The chain is Urease accessory protein UreD 1 from Methylorubrum populi (strain ATCC BAA-705 / NCIMB 13946 / BJ001) (Methylobacterium populi).